The primary structure comprises 565 residues: Wee1-like protein kinase 2 (565 aa).

Disordered stretches follow at residues 18-78 (YCEE…KSPE) and 169-191 (KSNG…GNVE). The segment covering 19–29 (CEEESESEGQE) has biased composition (acidic residues). Basic and acidic residues predominate over residues 31–51 (WETRDAHSQIPDRAEGQESEA). Phosphoserine is present on Ser76. The Nuclear localization signal signature appears at 173-175 (KRK). The Protein kinase domain maps to 214-492 (FLEVEKIGVG…ARSRVLRPSL (279 aa)). Residues 220–228 (IGVGEFGTV) and Lys243 each bind ATP. The Nuclear export signal motif lies at 317 to 331 (KLKDILLQISLGLKY). The active-site Proton acceptor is the Asp341. 2 residues coordinate Mg(2+): Asn346 and Asp382. Positions 495–521 (AEELQQQLNLEKFKTATLERELREAQQ) form a coiled coil. A disordered region spans residues 521 to 565 (QAWFSQEERGDAGVSGTPTGSRSTKRLVGGKSAKSSSFTWGKSSP). Residues 553-565 (AKSSSFTWGKSSP) show a composition bias toward polar residues.

It belongs to the protein kinase superfamily. Ser/Thr protein kinase family. WEE1 subfamily. Phosphorylation leads to increase its activity.

Its subcellular location is the nucleus. The enzyme catalyses L-tyrosyl-[protein] + ATP = O-phospho-L-tyrosyl-[protein] + ADP + H(+). Oocyte-specific protein tyrosine kinase that phosphorylates and inhibits CDK1 and acts as a key regulator of meiosis during both prophase I and metaphase II. Required to maintain meiotic arrest in oocytes during the germinal vesicle (GV) stage, a long period of quiescence at dictyate prophase I, by phosphorylating CDK1 at 'Tyr-15', leading to inhibit CDK1 activity and prevent meiotic reentry. Also required for metaphase II exit during egg activation by phosphorylating CDK1 at 'Tyr-15', to ensure exit from meiosis in oocytes and promote pronuclear formation. The protein is Wee1-like protein kinase 2 (WEE2) of Ailuropoda melanoleuca (Giant panda).